A 586-amino-acid polypeptide reads, in one-letter code: Glutamate--tRNA ligase (586 aa).

The interval leucine 84–glutamine 111 is disordered. A compositionally biased stretch (acidic residues) spans threonine 85–aspartate 94. The 'HIGH' region signature appears at proline 119–histidine 129.

It belongs to the class-I aminoacyl-tRNA synthetase family. Glutamate--tRNA ligase type 2 subfamily.

The protein localises to the cytoplasm. It carries out the reaction tRNA(Glu) + L-glutamate + ATP = L-glutamyl-tRNA(Glu) + AMP + diphosphate. Catalyzes the attachment of glutamate to tRNA(Glu) in a two-step reaction: glutamate is first activated by ATP to form Glu-AMP and then transferred to the acceptor end of tRNA(Glu). The chain is Glutamate--tRNA ligase from Haloquadratum walsbyi (strain DSM 16790 / HBSQ001).